A 223-amino-acid polypeptide reads, in one-letter code: Endonuclease V (223 aa).

Mg(2+) is bound by residues aspartate 45 and aspartate 113.

Belongs to the endonuclease V family. The cofactor is Mg(2+).

The protein localises to the cytoplasm. It carries out the reaction Endonucleolytic cleavage at apurinic or apyrimidinic sites to products with a 5'-phosphate.. DNA repair enzyme involved in the repair of deaminated bases. Selectively cleaves double-stranded DNA at the second phosphodiester bond 3' to a deoxyinosine leaving behind the intact lesion on the nicked DNA. The chain is Endonuclease V from Dehalococcoides mccartyi (strain CBDB1).